The sequence spans 436 residues: Proteasome-activating nucleotidase (436 aa).

Residues 7–98 (KDVRDLCEKF…LRSDLQRMKK (92 aa)) adopt a coiled-coil conformation. ATP-binding positions include 223 to 228 (GTGKTL) and histidine 362. The docks into pockets in the proteasome alpha-ring to cause gate opening stretch occupies residues 434-436 (AYH).

It belongs to the AAA ATPase family. As to quaternary structure, homohexamer. The hexameric complex has a two-ring architecture resembling a top hat that caps the 20S proteasome core at one or both ends. Upon ATP-binding, the C-terminus of PAN interacts with the alpha-rings of the proteasome core by binding to the intersubunit pockets.

It is found in the cytoplasm. ATPase which is responsible for recognizing, binding, unfolding and translocation of substrate proteins into the archaeal 20S proteasome core particle. Is essential for opening the gate of the 20S proteasome via an interaction with its C-terminus, thereby allowing substrate entry and access to the site of proteolysis. Thus, the C-termini of the proteasomal ATPase function like a 'key in a lock' to induce gate opening and therefore regulate proteolysis. Unfolding activity requires energy from ATP hydrolysis, whereas ATP binding alone promotes ATPase-20S proteasome association which triggers gate opening, and supports translocation of unfolded substrates. The sequence is that of Proteasome-activating nucleotidase from Methanopyrus kandleri (strain AV19 / DSM 6324 / JCM 9639 / NBRC 100938).